The primary structure comprises 440 residues: Proline--tRNA ligase (440 aa).

Belongs to the class-II aminoacyl-tRNA synthetase family. ProS type 2 subfamily. As to quaternary structure, homodimer.

It is found in the cytoplasm. It carries out the reaction tRNA(Pro) + L-proline + ATP = L-prolyl-tRNA(Pro) + AMP + diphosphate. In terms of biological role, catalyzes the attachment of proline to tRNA(Pro) in a two-step reaction: proline is first activated by ATP to form Pro-AMP and then transferred to the acceptor end of tRNA(Pro). This chain is Proline--tRNA ligase, found in Azorhizobium caulinodans (strain ATCC 43989 / DSM 5975 / JCM 20966 / LMG 6465 / NBRC 14845 / NCIMB 13405 / ORS 571).